Here is a 354-residue protein sequence, read N- to C-terminus: Rhodopsin (354 aa).

Residues 1–36 lie on the Extracellular side of the membrane; it reads MNGTEGPNFYVPMSNKTGVVRSPFDYPQYYLAEPWQ. Asn-2 and Asn-15 each carry an N-linked (GlcNAc...) asparagine glycan. The helical transmembrane segment at 37 to 61 threads the bilayer; the sequence is YSALAAYMFLLILLGLPINFMTLFV. Topologically, residues 62–73 are cytoplasmic; sequence TIQHKKLRTPLN. A helical membrane pass occupies residues 74 to 96; that stretch reads YILLNLVFANHFMVLCGFTVTMY. Residues 97–110 are Extracellular-facing; sequence TSMHGYFIFGPTGC. Cys-110 and Cys-187 form a disulfide bridge. The helical transmembrane segment at 111–133 threads the bilayer; that stretch reads YIEGFFATLGGEVALWSLVVLAV. A 'Ionic lock' involved in activated form stabilization motif is present at residues 134-136; the sequence is ERY. The Cytoplasmic portion of the chain corresponds to 134-152; it reads ERYIVVCKPMANFRFGENH. A helical transmembrane segment spans residues 153 to 173; sequence AIMGVAFTWIMALSCAAPPLF. Residues 174-202 are Extracellular-facing; the sequence is GWSRYIPEGMQCSCGVDYYTLKPEVNNES. The chain crosses the membrane as a helical span at residues 203 to 224; sequence FVIYMFIVHFTIPLIVIFFCYG. Topologically, residues 225 to 252 are cytoplasmic; it reads RLLCTVKEAAAQQQESLTTQKAEKEVTR. The helical transmembrane segment at 253 to 274 threads the bilayer; sequence MVVIMVVFFLICWVPYAYVAFY. Over 275-286 the chain is Extracellular; it reads IFTHQGSNFGPV. The chain crosses the membrane as a helical span at residues 287-308; sequence FMTVPAFFAKSSAIYNPVIYIV. The residue at position 296 (Lys-296) is an N6-(retinylidene)lysine. Over 309 to 354 the chain is Cytoplasmic; the sequence is LNKQFRNCLITTLCCGKNPFGDEDGSSAATSKTEASSVSSSQVSPA. Residues Cys-322 and Cys-323 are each lipidated (S-palmitoyl cysteine). Positions 331 to 354 are disordered; it reads EDGSSAATSKTEASSVSSSQVSPA. Residues 334-354 show a composition bias toward low complexity; that stretch reads SSAATSKTEASSVSSSQVSPA.

The protein belongs to the G-protein coupled receptor 1 family. Opsin subfamily. In terms of processing, contains one covalently linked retinal chromophore. Upon light absorption, the covalently bound 11-cis-retinal is converted to all-trans-retinal. After hydrolysis of the Schiff base and release of the covalently bound all-trans-retinal, active rhodopsin is regenerated by binding of a fresh molecule of 11-cis-retinal.

The protein localises to the membrane. It localises to the cell projection. It is found in the cilium. Its subcellular location is the photoreceptor outer segment. Functionally, photoreceptor required for image-forming vision at low light intensity. Required for photoreceptor cell viability after birth. Light-induced isomerization of 11-cis to all-trans retinal triggers a conformational change that activates signaling via G-proteins. Subsequent receptor phosphorylation mediates displacement of the bound G-protein alpha subunit by arrestin and terminates signaling. This chain is Rhodopsin (rho), found in Xenopus laevis (African clawed frog).